We begin with the raw amino-acid sequence, 427 residues long: Glutamate-1-semialdehyde 2,1-aminomutase (427 aa).

Lys-265 carries the N6-(pyridoxal phosphate)lysine modification.

This sequence belongs to the class-III pyridoxal-phosphate-dependent aminotransferase family. HemL subfamily. As to quaternary structure, homodimer. It depends on pyridoxal 5'-phosphate as a cofactor.

Its subcellular location is the cytoplasm. The enzyme catalyses (S)-4-amino-5-oxopentanoate = 5-aminolevulinate. The protein operates within porphyrin-containing compound metabolism; protoporphyrin-IX biosynthesis; 5-aminolevulinate from L-glutamyl-tRNA(Glu): step 2/2. The polypeptide is Glutamate-1-semialdehyde 2,1-aminomutase (Pseudomonas fluorescens (strain Pf0-1)).